A 463-amino-acid chain; its full sequence is Heterogeneous nuclear ribonucleoprotein K (463 aa).

Met-1 carries the post-translational modification N-acetylmethionine. The segment at 1 to 37 is disordered; the sequence is METEQPEETFPNTETNGEFGKRPAEDMEEEQAFKRSR. The tract at residues 1-276 is necessary for interaction with DDX1; that stretch reads METEQPEETF…GRGGRPMPPS (276 aa). The span at 19–37 shows a compositional bias: basic and acidic residues; it reads FGKRPAEDMEEEQAFKRSR. Residue Lys-34 is modified to N6-acetyllysine; alternate. Lys-34 participates in a covalent cross-link: Glycyl lysine isopeptide (Lys-Gly) (interchain with G-Cter in SUMO1); alternate. Lys-34 participates in a covalent cross-link: Glycyl lysine isopeptide (Lys-Gly) (interchain with G-Cter in SUMO2); alternate. Residues 35 to 197 are interaction with ASFV p30; that stretch reads RSRNTDEMVE…STDRVVLIGG (163 aa). Residue Ser-36 is modified to Phosphoserine. A Phosphothreonine modification is found at Thr-39. Residues 42-104 enclose the KH 1 domain; the sequence is MVELRILLQS…ETIGEILKKI (63 aa). Residues Lys-52 and Lys-60 each participate in a glycyl lysine isopeptide (Lys-Gly) (interchain with G-Cter in SUMO2) cross-link. 2 tandem repeats follow at residues 54 to 76 and 59 to 62. Positions 54-421 are 2 X 22 AA approximate repeats; sequence AGAVIGKGGK…QIRHESGASI (368 aa). Residues 59–407 form a 5 X 4 AA repeats of G-X-G-G region; the sequence is GKGGKNIKAL…LAGSIIGKGG (349 aa). Phosphoserine occurs at positions 75 and 116. The 66-residue stretch at 144 to 209 folds into the KH 2 domain; it reads DCELRLLIHQ…DRVVECIKII (66 aa). A Glycyl lysine isopeptide (Lys-Gly) (interchain with G-Cter in SUMO1); alternate cross-link involves residue Lys-163. Lys-163 is covalently cross-linked (Glycyl lysine isopeptide (Lys-Gly) (interchain with G-Cter in SUMO2); alternate). Lys-198 is modified (N6-acetyllysine). The tract at residues 209–337 is interaction with ZIK1; it reads ILDLISESPI…RPGDRYDGMV (129 aa). 2 positions are modified to phosphoserine: Ser-214 and Ser-216. A Glycyl lysine isopeptide (Lys-Gly) (interchain with G-Cter in SUMO2); alternate cross-link involves residue Lys-219. Position 219 is an N6-succinyllysine; alternate (Lys-219). The tract at residues 236 to 273 is RNA-binding RGG-box; sequence YGGFTMMFDDRRGRPVGFPMRGRGGFDRMPPGRGGRPM. 3 tandem repeats follow at residues 245 to 250, 257 to 260, and 267 to 270. A 2 X 6 AA approximate repeats region spans residues 245–329; that stretch reads DRRGRPVGFP…LMAYDRRGRP (85 aa). Residues 250–329 form a disordered region; sequence PVGFPMRGRG…LMAYDRRGRP (80 aa). Over residues 252–266 the composition is skewed to low complexity; the sequence is GFPMRGRGGFDRMPP. Positions 276 to 285 are enriched in basic and acidic residues; the sequence is SRRDYDDMSP. Residue Ser-284 is modified to Phosphoserine. One copy of the 3-4 repeat lies at 295 to 298; that stretch reads GRGG. Arg-316 is subject to Omega-N-methylarginine. Residues 324-329 form a 2-2 repeat; the sequence is DRRGRP. Arg-377 is modified (omega-N-methylarginine). Ser-379 carries the phosphoserine modification. Position 380 is a phosphotyrosine (Tyr-380). The 65-residue stretch at 387-451 folds into the KH 3 domain; that stretch reads IITTQVTIPK…DQIQNAQYLL (65 aa). Repeat copies occupy residues 399-421 and 404-407. Residue Lys-405 is modified to N6-acetyllysine; alternate. Residue Lys-405 forms a Glycyl lysine isopeptide (Lys-Gly) (interchain with G-Cter in SUMO2); alternate linkage. Ser-420 bears the Phosphoserine mark. Lys-422 is covalently cross-linked (Glycyl lysine isopeptide (Lys-Gly) (interchain with G-Cter in SUMO1); alternate). Lys-422 participates in a covalent cross-link: Glycyl lysine isopeptide (Lys-Gly) (interchain with G-Cter in SUMO2); alternate. Lys-422 is covalently cross-linked (Glycyl lysine isopeptide (Lys-Gly) (interchain with G-Cter in SUMO); alternate).

Identified in the spliceosome C complex. Part of a transcription inhibitory ribonucleoprotein complex composed at least of the circular RNA circZNF827, ZNF827 and HNRNPL. Interacts with RBM42 and ZIK1. Interacts with BRDT. Interacts with ANKRD28. Interacts with ASFV p30 protein. Interacts with DDX1. Interacts with MDM2; this interaction leads to ubiquitination and proteasomal degradation. Interacts with p53/TP53. Interacts with IVNS1ABP (via BACK domain); the interaction is direct. Interacts with PPIA/CYPA. In terms of assembly, (Microbial infection) Interacts with HCV core protein. Post-translationally, arg-296 and Arg-299 are dimethylated, probably to asymmetric dimethylarginine. Sumoylated by CBX4. Sumoylation is increased upon DNA damage, such as that produced by doxorubicin, etoposide, UV light and camptothecin, due to enhanced CBX4 phosphorylation by HIPK2 under these conditions. In terms of processing, ubiquitinated by MDM2. Doxorubicin treatment does not affect monoubiquitination, but slightly decreases HNRNPK poly-ubiquitination. Post-translationally, O-glycosylated (O-GlcNAcylated), in a cell cycle-dependent manner.

It localises to the cytoplasm. It is found in the nucleus. The protein resides in the nucleoplasm. The protein localises to the cell projection. Its subcellular location is the podosome. In terms of biological role, one of the major pre-mRNA-binding proteins. Binds tenaciously to poly(C) sequences. Likely to play a role in the nuclear metabolism of hnRNAs, particularly for pre-mRNAs that contain cytidine-rich sequences. Can also bind poly(C) single-stranded DNA. Plays an important role in p53/TP53 response to DNA damage, acting at the level of both transcription activation and repression. When sumoylated, acts as a transcriptional coactivator of p53/TP53, playing a role in p21/CDKN1A and 14-3-3 sigma/SFN induction. As far as transcription repression is concerned, acts by interacting with long intergenic RNA p21 (lincRNA-p21), a non-coding RNA induced by p53/TP53. This interaction is necessary for the induction of apoptosis, but not cell cycle arrest. As part of a ribonucleoprotein complex composed at least of ZNF827, HNRNPL and the circular RNA circZNF827 that nucleates the complex on chromatin, may negatively regulate the transcription of genes involved in neuronal differentiation. In Homo sapiens (Human), this protein is Heterogeneous nuclear ribonucleoprotein K (HNRNPK).